The following is a 53-amino-acid chain: Metallothionein (53 aa).

A propeptide spanning residues 1–6 (MRVIRM) is cleaved from the precursor. Residues Cys17, His19, Cys22, Cys24, Cys32, His33, Cys34, Cys43, and Cys45 each coordinate Cu(+).

This sequence belongs to the metallothionein superfamily.

Functionally, metallothioneins are small proteins that have a high content of cysteine residues which allow them to bind heavy metal ions through clusters of thiolate bonds. MymT binds up to seven ions of Cu(+), with a preference for four to six Cu(+) ions, in a solvent-shielded core. MymT protects M.tuberculosis from copper toxicity. This is Metallothionein (mymT) from Mycobacterium tuberculosis (strain CDC 1551 / Oshkosh).